Reading from the N-terminus, the 34-residue chain is Photosystem II reaction center protein M (34 aa).

A helical transmembrane segment spans residues 5-25; it reads ILAFIATALFVLIPTAFLIIL.

The protein belongs to the PsbM family. As to quaternary structure, PSII is composed of 1 copy each of membrane proteins PsbA, PsbB, PsbC, PsbD, PsbE, PsbF, PsbH, PsbI, PsbJ, PsbK, PsbL, PsbM, PsbT, PsbX, PsbY, PsbZ, Psb30/Ycf12, at least 3 peripheral proteins of the oxygen-evolving complex and a large number of cofactors. It forms dimeric complexes.

The protein resides in the plastid. Its subcellular location is the chloroplast thylakoid membrane. Its function is as follows. One of the components of the core complex of photosystem II (PSII). PSII is a light-driven water:plastoquinone oxidoreductase that uses light energy to abstract electrons from H(2)O, generating O(2) and a proton gradient subsequently used for ATP formation. It consists of a core antenna complex that captures photons, and an electron transfer chain that converts photonic excitation into a charge separation. This subunit is found at the monomer-monomer interface. The protein is Photosystem II reaction center protein M of Zygnema circumcarinatum (Green alga).